Reading from the N-terminus, the 504-residue chain is Apoptosis inhibitor 5 (504 aa).

The segment at 1–360 (MPTVEELYRN…HQLGRKLPDF (360 aa)) is ARM-like and Heat-like helical repeats. N6-acetyllysine is present on Lys-251. A leucine-zipper region spans residues 370 to 391 (LKDFKIRLQYFARGLQVYIRQL). Phosphothreonine is present on Thr-399. The segment at 452-504 (GQKRASEDTTSGSPPKKSSAGPKRDARQIYNPPSGKYSSNLGNFNYERSLQGK) is disordered. A Nuclear localization signal motif is present at residues 454–475 (KRASEDTTSGSPPKKSSAGPKR). Ser-462, Ser-464, and Ser-469 each carry phosphoserine. Over residues 462-472 (SGSPPKKSSAG) the composition is skewed to low complexity. Residues 487 to 504 (KYSSNLGNFNYERSLQGK) show a composition bias toward polar residues.

It belongs to the API5 family. Monomer. Interacts with FGF2 and ACIN1. In terms of processing, acetylation at Lys-251 impairs antiapoptotic function.

The protein resides in the nucleus. Its subcellular location is the cytoplasm. Its function is as follows. Antiapoptotic factor that may have a role in protein assembly. Negatively regulates ACIN1. By binding to ACIN1, it suppresses ACIN1 cleavage from CASP3 and ACIN1-mediated DNA fragmentation. Also known to efficiently suppress E2F1-induced apoptosis. This Pongo abelii (Sumatran orangutan) protein is Apoptosis inhibitor 5 (API5).